A 198-amino-acid chain; its full sequence is tRNA(Phe) 7-((3-amino-3-carboxypropyl)-4-demethylwyosine(37)-N(4))-methyltransferase 1 (198 aa).

The protein belongs to the TYW3 family.

The catalysed reaction is 4-demethyl-7-[(3S)-3-amino-3-carboxypropyl]wyosine(37) in tRNA(Phe) + S-adenosyl-L-methionine = 7-[(3S)-3-amino-3-carboxypropyl]wyosine(37) in tRNA(Phe) + S-adenosyl-L-homocysteine + H(+). Functionally, S-adenosyl-L-methionine-dependent methyltransferase that acts as a component of the wyosine derivatives biosynthesis pathway. Probably methylates N-4 position of wybutosine-86 to produce wybutosine-72. The protein is tRNA(Phe) 7-((3-amino-3-carboxypropyl)-4-demethylwyosine(37)-N(4))-methyltransferase 1 of Thermococcus kodakarensis (strain ATCC BAA-918 / JCM 12380 / KOD1) (Pyrococcus kodakaraensis (strain KOD1)).